A 301-amino-acid polypeptide reads, in one-letter code: Mycothiol acetyltransferase (301 aa).

N-acetyltransferase domains follow at residues 7–150 and 152–301; these read VDWQ…PPVD and VRFA…AVEG. D39 serves as a coordination point for 1D-myo-inositol 2-(L-cysteinylamino)-2-deoxy-alpha-D-glucopyranoside. Residues 80–82 and 88–93 contribute to the acetyl-CoA site; these read LVV and RRGIGS. 1D-myo-inositol 2-(L-cysteinylamino)-2-deoxy-alpha-D-glucopyranoside is bound by residues E179, K220, and E228. Position 232–234 (232–234) interacts with acetyl-CoA; it reads VGV. Y271 is a 1D-myo-inositol 2-(L-cysteinylamino)-2-deoxy-alpha-D-glucopyranoside binding site. Residue 276 to 281 coordinates acetyl-CoA; the sequence is NTAAVK.

Belongs to the acetyltransferase family. MshD subfamily. Monomer.

The enzyme catalyses 1D-myo-inositol 2-(L-cysteinylamino)-2-deoxy-alpha-D-glucopyranoside + acetyl-CoA = mycothiol + CoA + H(+). Its function is as follows. Catalyzes the transfer of acetyl from acetyl-CoA to desacetylmycothiol (Cys-GlcN-Ins) to form mycothiol. The protein is Mycothiol acetyltransferase of Mycolicibacterium vanbaalenii (strain DSM 7251 / JCM 13017 / BCRC 16820 / KCTC 9966 / NRRL B-24157 / PYR-1) (Mycobacterium vanbaalenii).